The following is a 472-amino-acid chain: uncharacterized protein (472 aa).

The next 6 membrane-spanning stretches (helical) occupy residues 4 to 24 (IIILLALGLLMFTAYRGFSVI), 27 to 47 (APICALFAVLLTDPSHVLPFF), 56 to 76 (AGFIKLYFPVFLLGAIFGKVV), 99 to 119 (ILAIVLMGAVLTYSGVSLFVV), 140 to 160 (LIPGTIALGAFTFTMDALPGT), and 176 to 196 (IYAAPWLGLMGAVIVLAAGML). Residues 209–229 (GEGYGGFDSQNAPAPESIESA) form a disordered region. Residues 220 to 229 (APAPESIESA) show a composition bias toward low complexity. 5 consecutive transmembrane segments (helical) span residues 240 to 260 (ALAFVPLILVGAVNKYFTIYL), 286 to 306 (AAAIWSVEIALVIGIITTILF), 323 to 343 (IGGALLASMNTGAEYGFGGII), 372 to 392 (TALAGITGSASGGMGIALSAM), and 448 to 468 (IFAITLIKTAAVFAVIAIYSL).

This sequence belongs to the CitM (TC 2.A.11) transporter family.

Its subcellular location is the cell membrane. This is an uncharacterized protein from Bacillus subtilis (strain 168).